The following is a 216-amino-acid chain: Somatotropin (216 aa).

The N-terminal stretch at 1 to 26 (MAAGPRTSVLLAFTLLCLPWPQEAGA) is a signal peptide. H45 contributes to the Zn(2+) binding site. A disulfide bridge links C78 with C189. S131 is modified (phosphoserine). Residue E198 coordinates Zn(2+). Residues C206 and C214 are joined by a disulfide bond.

This sequence belongs to the somatotropin/prolactin family.

The protein localises to the secreted. Its function is as follows. Plays an important role in growth control. Its major role in stimulating body growth is to stimulate the liver and other tissues to secrete IGF1. It stimulates both the differentiation and proliferation of myoblasts. It also stimulates amino acid uptake and protein synthesis in muscle and other tissues. The polypeptide is Somatotropin (GH1) (Camelus dromedarius (Dromedary)).